Consider the following 180-residue polypeptide: Ribosome maturation factor RimM (180 aa).

In terms of domain architecture, PRC barrel spans 103-176 (GDIWWDRDLV…RIVVDPPPGL (74 aa)).

It belongs to the RimM family. Binds ribosomal protein uS19.

It is found in the cytoplasm. An accessory protein needed during the final step in the assembly of 30S ribosomal subunit, possibly for assembly of the head region. Essential for efficient processing of 16S rRNA. May be needed both before and after RbfA during the maturation of 16S rRNA. It has affinity for free ribosomal 30S subunits but not for 70S ribosomes. In Frankia alni (strain DSM 45986 / CECT 9034 / ACN14a), this protein is Ribosome maturation factor RimM.